The chain runs to 369 residues: Terpene cyclase DEP1 (369 aa).

Helical transmembrane passes span 9 to 29 (FFYLSALGIWGLWVYAFFNGM), 82 to 102 (LLFFDVNYVVACANLWVLIES), 118 to 138 (AMVLCNANGAAIVLPLYLYLV), 157 to 177 (ALLVSTVVILLQPLLIFVPAW), 190 to 210 (IALFQVAPIGVSVFHLGLASI), 234 to 254 (LVLAGTVAAAVHSYTVVGALI), 298 to 318 (LFSQWDWIVVALTSVLYSHLL), and 342 to 362 (LVYLTVATIILGPGGAASFAL).

It belongs to the membrane-bound ascI terpene cyclase family.

It is found in the membrane. The protein operates within polyketide biosynthesis. Part of the gene cluster that mediates the biosynthesis of depudecin, a highly oxidized eleven-carbon linear polyketide that acts as a histone deacetylase (HDAC) inhibitor and makes a small contribution to pathogenesis. The reducing polyketide synthase DEP5 is the central enzyme in depudecin biosynthesis by yielding the backbone polyketide chain. The monooxygenases DEP2 and DEP4, as well as the uncharacterized protein DEP1, then act as tailoring enzymes to modify the intermediate polyketide chain into depudecin. This chain is Terpene cyclase DEP1, found in Alternaria brassicicola (Dark leaf spot agent).